The chain runs to 210 residues: Glutathione S-transferase P 10 (210 aa).

Residues 2-81 (AVPQLYYFTI…HLGRVHGLNG (80 aa)) enclose the GST N-terminal domain. Glutathione-binding positions include tyrosine 8, tryptophan 41, lysine 45, 52 to 53 (QL), and 65 to 66 (QT). In terms of domain architecture, GST C-terminal spans 83-200 (NEQEATFLDM…YLEKRKADKV (118 aa)).

Belongs to the GST superfamily. Pi family. In terms of assembly, homodimer. Expressed in cells at the mouth and adjacent to the pharyngeal bulbs of the head and also in the tail.

It carries out the reaction RX + glutathione = an S-substituted glutathione + a halide anion + H(+). Functionally, conjugation of reduced glutathione to a wide number of exogenous and endogenous hydrophobic electrophiles. Responsible for approximately one-third of 4-hydroxy-2-nonenal conjugation. May play a role in the detoxification of reactive oxygen species produced during pathogenic bacterial infection. The sequence is that of Glutathione S-transferase P 10 from Caenorhabditis elegans.